Here is a 274-residue protein sequence, read N- to C-terminus: Undecaprenyl-diphosphatase (274 aa).

The next 7 helical transmembrane spans lie at 4–24, 41–61, 83–103, 108–128, 184–204, 218–238, and 246–266; these read PLFV…FLPI, DATS…AVCW, FVGL…MFHS, LLFN…LILW, AAEF…VYDL, VFAI…KAFI, and FIAF…TWQL.

Belongs to the UppP family.

The protein resides in the cell inner membrane. It catalyses the reaction di-trans,octa-cis-undecaprenyl diphosphate + H2O = di-trans,octa-cis-undecaprenyl phosphate + phosphate + H(+). In terms of biological role, catalyzes the dephosphorylation of undecaprenyl diphosphate (UPP). Confers resistance to bacitracin. The chain is Undecaprenyl-diphosphatase from Aromatoleum aromaticum (strain DSM 19018 / LMG 30748 / EbN1) (Azoarcus sp. (strain EbN1)).